The primary structure comprises 469 residues: uncharacterized protein (469 aa).

3 consecutive transmembrane segments (helical) span residues 42–62 (DVII…AYVI), 179–199 (IVLP…VTPS), and 249–269 (NLKY…GLFV).

It is found in the cell membrane. This is an uncharacterized protein from Methanocaldococcus jannaschii (strain ATCC 43067 / DSM 2661 / JAL-1 / JCM 10045 / NBRC 100440) (Methanococcus jannaschii).